The chain runs to 730 residues: Translation initiation factor IF-2 (730 aa).

The segment at 48–151 (GNGNQKQGGS…NKAKPLPEKV (104 aa)) is disordered. Basic and acidic residues-rich tracts occupy residues 61–77 (EQQK…DHGQ) and 89–104 (NQHD…KGKA). Basic residues predominate over residues 110 to 123 (KPKHKGNKNKKQHQ). Basic and acidic residues predominate over residues 137-148 (RQPEMNKAKPLP). A tr-type G domain is found at 231–400 (ERPPVVTIMG…LLVAEVEELK (170 aa)). The G1 stretch occupies residues 240–247 (GHVDHGKT). 240–247 (GHVDHGKT) lines the GTP pocket. The G2 stretch occupies residues 265–269 (GITQH). The G3 stretch occupies residues 286–289 (DTPG). Residues 286 to 290 (DTPGH) and 340 to 343 (NKMD) each bind GTP. The G4 stretch occupies residues 340–343 (NKMD). Positions 376 to 378 (SAL) are G5.

The protein belongs to the TRAFAC class translation factor GTPase superfamily. Classic translation factor GTPase family. IF-2 subfamily.

The protein resides in the cytoplasm. Functionally, one of the essential components for the initiation of protein synthesis. Protects formylmethionyl-tRNA from spontaneous hydrolysis and promotes its binding to the 30S ribosomal subunits. Also involved in the hydrolysis of GTP during the formation of the 70S ribosomal complex. In Halalkalibacterium halodurans (strain ATCC BAA-125 / DSM 18197 / FERM 7344 / JCM 9153 / C-125) (Bacillus halodurans), this protein is Translation initiation factor IF-2.